A 333-amino-acid polypeptide reads, in one-letter code: Foldase protein PrsA (333 aa).

A signal peptide spans 1–22 (MKKSTKLLAGIVTLASAMTLAA). The N-palmitoyl cysteine moiety is linked to residue cysteine 23. Cysteine 23 is lipidated: S-diacylglycerol cysteine. Residues 145–240 (TPEMTTQVIT…NKFYIVKVTK (96 aa)) form the PpiC domain. The disordered stretch occupies residues 301–333 (DKKASKANTSKSDQKTSSDSSKDSQSSKSKSEK). The span at 312–322 (SDQKTSSDSSK) shows a compositional bias: basic and acidic residues. The segment covering 323 to 333 (DSQSSKSKSEK) has biased composition (low complexity).

Belongs to the PrsA family.

It localises to the cell membrane. The catalysed reaction is [protein]-peptidylproline (omega=180) = [protein]-peptidylproline (omega=0). Its function is as follows. Plays a major role in protein secretion by helping the post-translocational extracellular folding of several secreted proteins. The polypeptide is Foldase protein PrsA (Streptococcus equi subsp. zooepidemicus (strain MGCS10565)).